We begin with the raw amino-acid sequence, 264 residues long: Movement protein (264 aa).

A disordered region spans residues 211–264 (RTKSSKRGPKNNNNLGKGRSGGRPKPKSVDEVEEEFDNLIEDEAETSVADSDSY). Acidic residues predominate over residues 241-255 (EVEEEFDNLIEDEAE).

This sequence belongs to the tobamovirus movement protein family. As to quaternary structure, binds to host RBCS at the plasmodesmata; this interaction seems required for viral systemic movement. In resistant plants, interacts with host MBP2C at host microtubules; this interaction prevents virus cell to cell movement. In resistant plants, interacts with host resistance (R) protein (e.g. tomato ToMV resistance protein TM-2(2), AC Q71BG9) at the host plasma membrane; this interaction triggers host defense responses leading to programmed cell death.

It is found in the host cytoplasm. Its subcellular location is the host cytoskeleton. The protein localises to the host cell junction. It localises to the host plasmodesma. In terms of biological role, transports viral genome to neighboring plant cells directly through plasmosdesmata, without any budding. The movement protein allows efficient cell to cell propagation, by bypassing the host cell wall barrier. Forms a ribonucleoprotein complex with viral RNA. Binds microtubules and modulates microtubule stability. Can bind double-stranded DNA. Triggers host hypersensitive defense reaction in incompatible plants harboring resistance (R) proteins. The protein is Movement protein (MP) of Antirrhinum majus (Garden snapdragon).